The primary structure comprises 109 residues: Cell division suppressor protein YneA (109 aa).

The LysM domain maps to Ser-39–Ile-90.

The protein belongs to the YneA family.

It is found in the cytoplasm. Inhibits cell division during the SOS response. Affects a later stage of the cell division protein assembly, after the assembly of the Z ring, by probably suppressing recruitment of FtsL and/or DivIC to the division machinery. The polypeptide is Cell division suppressor protein YneA (Listeria monocytogenes serovar 1/2a (strain ATCC BAA-679 / EGD-e)).